We begin with the raw amino-acid sequence, 264 residues long: Protein-L-isoaspartate O-methyltransferase (264 aa).

The interval 1–49 (MRKPVGSKDGSGVYSRQGLDGYTPANSNTRISTATLPRPEPLRPAASSA) is disordered. Over residues 24–35 (PANSNTRISTAT) the composition is skewed to polar residues. S112 is a catalytic residue.

This sequence belongs to the methyltransferase superfamily. L-isoaspartyl/D-aspartyl protein methyltransferase family.

The protein resides in the cytoplasm. It catalyses the reaction [protein]-L-isoaspartate + S-adenosyl-L-methionine = [protein]-L-isoaspartate alpha-methyl ester + S-adenosyl-L-homocysteine. Functionally, catalyzes the methyl esterification of L-isoaspartyl residues in peptides and proteins that result from spontaneous decomposition of normal L-aspartyl and L-asparaginyl residues. It plays a role in the repair and/or degradation of damaged proteins. The protein is Protein-L-isoaspartate O-methyltransferase of Bordetella avium (strain 197N).